The primary structure comprises 186 residues: Ribosome-recycling factor (186 aa).

It belongs to the RRF family.

It localises to the cytoplasm. In terms of biological role, responsible for the release of ribosomes from messenger RNA at the termination of protein biosynthesis. May increase the efficiency of translation by recycling ribosomes from one round of translation to another. The sequence is that of Ribosome-recycling factor from Bacteroides thetaiotaomicron (strain ATCC 29148 / DSM 2079 / JCM 5827 / CCUG 10774 / NCTC 10582 / VPI-5482 / E50).